We begin with the raw amino-acid sequence, 3507 residues long: Dynein axonemal heavy chain 14 (3507 aa).

Residues 91-126 (PHLPGTQDPLRRVRDPTPIVASSPGRRRGSWSGGYG) form a disordered region. The stretch at 354–381 (DEFCEEQLQQATQALKQLEDIRNKAISE) forms a coiled coil. The GPAGTGKT motif signature appears at 1164-1171 (GPAGTGKT). Residues 1164–1171 (GPAGTGKT) and 1427–1434 (GPTGGGKT) each bind ATP. Residue N1818 is glycosylated (N-linked (GlcNAc...) asparagine).

Belongs to the dynein heavy chain family. Consists of at least two heavy chains and a number of intermediate and light chains.

It is found in the cytoplasm. It localises to the cytoskeleton. The protein localises to the cilium axoneme. Force generating protein of respiratory cilia. Produces force towards the minus ends of microtubules. Dynein has ATPase activity; the force-producing power stroke is thought to occur on release of ADP. Involved in sperm motility; implicated in sperm flagellar assembly. This is Dynein axonemal heavy chain 14 (DNAH14) from Homo sapiens (Human).